The sequence spans 389 residues: Teichoic acid ribitol-phosphate primase (389 aa).

It belongs to the CDP-glycerol glycerophosphotransferase family.

The protein localises to the cell membrane. The enzyme catalyses 4-O-[(2R)-glycerylphospho]-N-acetyl-beta-D-mannosaminyl-(1-&gt;4)-N-acetyl-alpha-D-glucosaminyl di-trans,octa-cis-undecaprenyl diphosphate + CDP-L-ribitol = 4-O-[1-D-ribitylphospho-(2R)-1-glycerylphospho]-N-acetyl-beta-D-mannosaminyl-(1-&gt;4)-N-acetyl-alpha-D-glucosaminyl di-trans,octa-cis-undecaprenyl diphosphate + CMP + H(+). It participates in cell wall biogenesis; poly(ribitol phosphate) teichoic acid biosynthesis. In terms of biological role, catalyzes the addition of a single ribitol phosphate unit onto the glycerol phosphate of the linkage unit, as a primer for polymerisation by TarL. In Bacillus spizizenii (strain ATCC 23059 / NRRL B-14472 / W23) (Bacillus subtilis subsp. spizizenii), this protein is Teichoic acid ribitol-phosphate primase (tarK).